The following is a 198-amino-acid chain: Glycerol-3-phosphate acyltransferase (198 aa).

The next 5 membrane-spanning stretches (helical) occupy residues 6–26 (MLPVALLIGYLLGSIPFGLIL), 56–78 (LAAATLLGDALKGTAAVIIAGYL), 83–101 (AAMLAGLGAFLGHLFPVWL), 113–133 (IGILIGLLWPYAIFFCLVWLA), and 154–174 (IVLWAFGHTALAALFALLTLL).

It belongs to the PlsY family. Probably interacts with PlsX.

The protein localises to the cell inner membrane. The catalysed reaction is an acyl phosphate + sn-glycerol 3-phosphate = a 1-acyl-sn-glycero-3-phosphate + phosphate. It functions in the pathway lipid metabolism; phospholipid metabolism. In terms of biological role, catalyzes the transfer of an acyl group from acyl-phosphate (acyl-PO(4)) to glycerol-3-phosphate (G3P) to form lysophosphatidic acid (LPA). This enzyme utilizes acyl-phosphate as fatty acyl donor, but not acyl-CoA or acyl-ACP. This chain is Glycerol-3-phosphate acyltransferase, found in Bradyrhizobium sp. (strain ORS 278).